The primary structure comprises 63 residues: Small ribosomal subunit protein bS21 (63 aa).

Belongs to the bacterial ribosomal protein bS21 family.

This Parabacteroides distasonis (strain ATCC 8503 / DSM 20701 / CIP 104284 / JCM 5825 / NCTC 11152) protein is Small ribosomal subunit protein bS21.